We begin with the raw amino-acid sequence, 131 residues long: 23S rRNA-specific endonuclease VapC20 (131 aa).

The 124-residue stretch at 2–125 (IFVDTSFWAA…FDGDFSAAGF (124 aa)) folds into the PINc domain. Mg(2+) is bound by residues aspartate 5 and aspartate 98.

Belongs to the PINc/VapC protein family. It depends on Mg(2+) as a cofactor.

In terms of biological role, toxic component of a type II toxin-antitoxin (TA) system. An endoribonuclease that cleaves 23S rRNA in the sarcin-ricin loop (SRL). The SRL sequence is highly conserved and is implicated in GTP hydrolysis by EF-Tu and EF-G. Acts on purified ribosomes but not on isolated RNA. Its toxic effect is neutralized by coexpression with cognate antitoxin VapB20. The chain is 23S rRNA-specific endonuclease VapC20 (vapC20) from Mycobacterium tuberculosis (strain CDC 1551 / Oshkosh).